Consider the following 151-residue polypeptide: Ribosomal RNA large subunit methyltransferase H (151 aa).

S-adenosyl-L-methionine-binding positions include Gly-100 and 119 to 124 (LSRMTF).

This sequence belongs to the RNA methyltransferase RlmH family. As to quaternary structure, homodimer.

The protein resides in the cytoplasm. It carries out the reaction pseudouridine(1915) in 23S rRNA + S-adenosyl-L-methionine = N(3)-methylpseudouridine(1915) in 23S rRNA + S-adenosyl-L-homocysteine + H(+). In terms of biological role, specifically methylates the pseudouridine at position 1915 (m3Psi1915) in 23S rRNA. This Thermotoga neapolitana (strain ATCC 49049 / DSM 4359 / NBRC 107923 / NS-E) protein is Ribosomal RNA large subunit methyltransferase H.